Reading from the N-terminus, the 197-residue chain is Nucleoid occlusion factor SlmA (197 aa).

The 61-residue stretch at 7–67 (INRREHILQC…GLIEFIEESL (61 aa)) folds into the HTH tetR-type domain. The segment at residues 30–49 (TTAKLASEVGVSEAALYRHF) is a DNA-binding region (H-T-H motif). Residues 109–136 (DALLGENERLRSRISNLFAKIETQLKQI) adopt a coiled-coil conformation.

This sequence belongs to the nucleoid occlusion factor SlmA family. Homodimer. Interacts with FtsZ.

The protein localises to the cytoplasm. The protein resides in the nucleoid. Functionally, required for nucleoid occlusion (NO) phenomenon, which prevents Z-ring formation and cell division over the nucleoid. Acts as a DNA-associated cell division inhibitor that binds simultaneously chromosomal DNA and FtsZ, and disrupts the assembly of FtsZ polymers. SlmA-DNA-binding sequences (SBS) are dispersed on non-Ter regions of the chromosome, preventing FtsZ polymerization at these regions. This is Nucleoid occlusion factor SlmA from Shewanella baltica (strain OS223).